Here is a 137-residue protein sequence, read N- to C-terminus: Large-conductance mechanosensitive channel (137 aa).

2 helical membrane passes run 15–35 and 81–101; these read VDLA…TSLV and GKFI…FFVI.

Belongs to the MscL family. In terms of assembly, homopentamer.

Its subcellular location is the cell inner membrane. Its function is as follows. Channel that opens in response to stretch forces in the membrane lipid bilayer. May participate in the regulation of osmotic pressure changes within the cell. In Hyphomonas neptunium (strain ATCC 15444), this protein is Large-conductance mechanosensitive channel.